A 281-amino-acid chain; its full sequence is 2-dehydro-3-deoxyphosphooctonate aldolase (281 aa).

Belongs to the KdsA family.

The protein resides in the cytoplasm. It carries out the reaction D-arabinose 5-phosphate + phosphoenolpyruvate + H2O = 3-deoxy-alpha-D-manno-2-octulosonate-8-phosphate + phosphate. It participates in carbohydrate biosynthesis; 3-deoxy-D-manno-octulosonate biosynthesis; 3-deoxy-D-manno-octulosonate from D-ribulose 5-phosphate: step 2/3. It functions in the pathway bacterial outer membrane biogenesis; lipopolysaccharide biosynthesis. The protein is 2-dehydro-3-deoxyphosphooctonate aldolase of Pseudomonas entomophila (strain L48).